The primary structure comprises 552 residues: Glutamine--tRNA ligase (552 aa).

The short motif at 33 to 43 is the 'HIGH' region element; sequence PEPNGYLHIGH. Residues 34–36 and 40–46 each bind ATP; these read EPN and HIGHAKS. 2 residues coordinate L-glutamine: D66 and Y210. ATP-binding positions include T229, 259–260, and 267–269; these read RL and MSK. The 'KMSKS' region motif lies at 266–270; the sequence is VMSKR.

It belongs to the class-I aminoacyl-tRNA synthetase family. In terms of assembly, monomer.

The protein localises to the cytoplasm. The catalysed reaction is tRNA(Gln) + L-glutamine + ATP = L-glutaminyl-tRNA(Gln) + AMP + diphosphate. The chain is Glutamine--tRNA ligase from Clostridium perfringens (strain ATCC 13124 / DSM 756 / JCM 1290 / NCIMB 6125 / NCTC 8237 / Type A).